The following is a 100-amino-acid chain: Urease subunit gamma (100 aa).

It belongs to the urease gamma subunit family. Heterotrimer of UreA (gamma), UreB (beta) and UreC (alpha) subunits. Three heterotrimers associate to form the active enzyme.

It localises to the cytoplasm. The enzyme catalyses urea + 2 H2O + H(+) = hydrogencarbonate + 2 NH4(+). The protein operates within nitrogen metabolism; urea degradation; CO(2) and NH(3) from urea (urease route): step 1/1. In Prochlorococcus marinus subsp. pastoris (strain CCMP1986 / NIES-2087 / MED4), this protein is Urease subunit gamma.